Here is a 605-residue protein sequence, read N- to C-terminus: uncharacterized protein (605 aa).

The tract at residues 111–151 is disordered; sequence VNVNDGKPNDIELSSTSKTENDPPLSLHTTPDDLQGNGVNV.

It localises to the golgi apparatus. This is an uncharacterized protein from Schizosaccharomyces pombe (strain 972 / ATCC 24843) (Fission yeast).